We begin with the raw amino-acid sequence, 255 residues long: 4-hydroxy-tetrahydrodipicolinate reductase (255 aa).

Residues 9–14 (GFKGKM), Asp-35, 89–91 (GTT), and 115–118 (APNF) each bind NAD(+). Catalysis depends on His-145, which acts as the Proton donor/acceptor. A (S)-2,3,4,5-tetrahydrodipicolinate-binding site is contributed by His-146. Lys-149 (proton donor) is an active-site residue. 155–156 (GT) contributes to the (S)-2,3,4,5-tetrahydrodipicolinate binding site.

The protein belongs to the DapB family.

Its subcellular location is the cytoplasm. It carries out the reaction (S)-2,3,4,5-tetrahydrodipicolinate + NAD(+) + H2O = (2S,4S)-4-hydroxy-2,3,4,5-tetrahydrodipicolinate + NADH + H(+). The enzyme catalyses (S)-2,3,4,5-tetrahydrodipicolinate + NADP(+) + H2O = (2S,4S)-4-hydroxy-2,3,4,5-tetrahydrodipicolinate + NADPH + H(+). It functions in the pathway amino-acid biosynthesis; L-lysine biosynthesis via DAP pathway; (S)-tetrahydrodipicolinate from L-aspartate: step 4/4. Functionally, catalyzes the conversion of 4-hydroxy-tetrahydrodipicolinate (HTPA) to tetrahydrodipicolinate. This Streptococcus pneumoniae serotype 4 (strain ATCC BAA-334 / TIGR4) protein is 4-hydroxy-tetrahydrodipicolinate reductase.